The sequence spans 219 residues: Formate dehydrogenase 2 subunit beta (cytochrome c-553) (219 aa).

The 30-residue stretch at 3 to 32 (KAFLIDTTRCTACRGCQLACKEWHDLPANV) folds into the 4Fe-4S ferredoxin-type 1 domain. Positions 12, 15, 18, 22, 74, 77, 82, 124, 141, 144, 156, and 160 each coordinate [4Fe-4S] cluster. In terms of domain architecture, 4Fe-4S ferredoxin-type 2 spans 132–171 (DPKTKRITKCDMCFDRVSAGMQPICVKTCPTGTMAFGERD).

In terms of assembly, heterotrimer of cytochrome c3 FDH2C and formate dehydrogenase FDH2 alpha and beta subunits that forms the FdhABC(3) complex. It depends on [4Fe-4S] cluster as a cofactor.

It localises to the periplasm. Its function is as follows. Beta chain of the formate dehydrogenase (FDH) that catalyzes the reversible two-electron oxidation of formate to carbon dioxide. The beta chain is an electron transfer unit. This chain is Formate dehydrogenase 2 subunit beta (cytochrome c-553), found in Nitratidesulfovibrio vulgaris (strain ATCC 29579 / DSM 644 / CCUG 34227 / NCIMB 8303 / VKM B-1760 / Hildenborough) (Desulfovibrio vulgaris).